The sequence spans 359 residues: 5-formaminoimidazole-4-carboxamide-1-(beta)-D-ribofuranosyl 5'-monophosphate synthetase (359 aa).

Residues His-28 and Ser-95 each contribute to the 5-amino-1-(5-phospho-beta-D-ribosyl)imidazole-4-carboxamide site. The region spanning 115-346 is the ATP-grasp domain; it reads ELMIWETDRD…MGRRIAREIK (232 aa). ATP is bound by residues 144-206 and Glu-228; that span reads PEEI…ANIY. Residue Asn-256 participates in 5-amino-1-(5-phospho-beta-D-ribosyl)imidazole-4-carboxamide binding. Mg(2+) contacts are provided by Glu-295 and Glu-308.

Belongs to the phosphohexose mutase family. Mg(2+) serves as cofactor. Requires Mn(2+) as cofactor.

It catalyses the reaction 5-amino-1-(5-phospho-beta-D-ribosyl)imidazole-4-carboxamide + formate + ATP = 5-formamido-1-(5-phospho-D-ribosyl)imidazole-4-carboxamide + ADP + phosphate. It participates in purine metabolism; IMP biosynthesis via de novo pathway; 5-formamido-1-(5-phospho-D-ribosyl)imidazole-4-carboxamide from 5-amino-1-(5-phospho-D-ribosyl)imidazole-4-carboxamide (formate route): step 1/1. In terms of biological role, catalyzes the ATP- and formate-dependent formylation of 5-aminoimidazole-4-carboxamide-1-beta-d-ribofuranosyl 5'-monophosphate (AICAR) to 5-formaminoimidazole-4-carboxamide-1-beta-d-ribofuranosyl 5'-monophosphate (FAICAR) in the absence of folates. The protein is 5-formaminoimidazole-4-carboxamide-1-(beta)-D-ribofuranosyl 5'-monophosphate synthetase of Archaeoglobus fulgidus (strain ATCC 49558 / DSM 4304 / JCM 9628 / NBRC 100126 / VC-16).